The sequence spans 326 residues: Cyclin-dependent kinase 6 (326 aa).

Methionine 1 carries the post-translational modification N-acetylmethionine. Tyrosine 13 and tyrosine 24 each carry phosphotyrosine. The Protein kinase domain occupies 13 to 300 (YECVAEIGEG…AYSALSHPYF (288 aa)). Residues 19-27 (IGEGAYGKV) and lysine 43 contribute to the ATP site. Threonine 49 and threonine 70 each carry phosphothreonine. Aspartate 145 functions as the Proton acceptor in the catalytic mechanism. A Phosphothreonine modification is found at threonine 177. Lysine 264 carries the post-translational modification N6-acetyllysine. Position 325 is a phosphothreonine (threonine 325).

Belongs to the protein kinase superfamily. CMGC Ser/Thr protein kinase family. CDC2/CDKX subfamily. In terms of assembly, interaction with D-type G1 cyclins. Cyclin binding promotes enzyme activation by phosphorylation at Thr-177. Binds to RUNX1, CDKN2D, FBXO7 and CDKN2C/p18-INK4c. Forms a cytoplasmic complex with Hsp90/HSP90AB1 and CDC37. FBXO7-binding promotes D-type cyclin binding. Interacts with Kaposi's sarcoma herpesvirus (KSHV) V-cyclin and herpesvirus saimiri (V-cyclin/ECLF2); the CDK6/V-cyclin complex phosphorylates NPM1 and thus lead to viral reactivation by reducing viral LANA levels. In terms of processing, thr-177 phosphorylation and Tyr-24 dephosphorylation promotes kinase activity. As to expression, expressed ubiquitously. Accumulates in squamous cell carcinomas, proliferating hematopoietic progenitor cells, beta-cells of pancreatic islets of Langerhans, and neuroblastomas. Reduced levels in differentiating cells.

It is found in the cytoplasm. The protein localises to the nucleus. The protein resides in the cell projection. It localises to the ruffle. Its subcellular location is the cytoskeleton. It is found in the microtubule organizing center. The protein localises to the centrosome. It carries out the reaction L-seryl-[protein] + ATP = O-phospho-L-seryl-[protein] + ADP + H(+). The catalysed reaction is L-threonyl-[protein] + ATP = O-phospho-L-threonyl-[protein] + ADP + H(+). With respect to regulation, inhibited by INK4 proteins (CDKN2C/p18-INK4c), aminopurvalanol, PD0332991, 4-(Pyrazol-4-yl)-pyrimidines and fisetin, a flavonol inhibitor. Activated by Thr-177 phosphorylation and Tyr-24 dephosphorylation. Stimulated by cyclin from herpesvirus saimiri (V-cyclin/ECLF2). Rapidly down-regulated prior to cell differentiation (e.g. erythroid and osteoblast). Functionally, serine/threonine-protein kinase involved in the control of the cell cycle and differentiation; promotes G1/S transition. Phosphorylates pRB/RB1 and NPM1. Interacts with D-type G1 cyclins during interphase at G1 to form a pRB/RB1 kinase and controls the entrance into the cell cycle. Involved in initiation and maintenance of cell cycle exit during cell differentiation; prevents cell proliferation and negatively regulates cell differentiation, but is required for the proliferation of specific cell types (e.g. erythroid and hematopoietic cells). Essential for cell proliferation within the dentate gyrus of the hippocampus and the subventricular zone of the lateral ventricles. Required during thymocyte development. Promotes the production of newborn neurons, probably by modulating G1 length. Promotes, at least in astrocytes, changes in patterns of gene expression, changes in the actin cytoskeleton including loss of stress fibers, and enhanced motility during cell differentiation. Prevents myeloid differentiation by interfering with RUNX1 and reducing its transcription transactivation activity, but promotes proliferation of normal myeloid progenitors. Delays senescence. Promotes the proliferation of beta-cells in pancreatic islets of Langerhans. May play a role in the centrosome organization during the cell cycle phases. This chain is Cyclin-dependent kinase 6 (CDK6), found in Homo sapiens (Human).